Consider the following 448-residue polypeptide: Phosphoglucosamine mutase (448 aa).

Ser100 (phosphoserine intermediate) is an active-site residue. Residues Ser100, Asp240, Asp242, and Asp244 each contribute to the Mg(2+) site. Ser100 bears the Phosphoserine mark.

Belongs to the phosphohexose mutase family. Mg(2+) is required as a cofactor. In terms of processing, activated by phosphorylation.

The enzyme catalyses alpha-D-glucosamine 1-phosphate = D-glucosamine 6-phosphate. Functionally, catalyzes the conversion of glucosamine-6-phosphate to glucosamine-1-phosphate. In Alkaliphilus metalliredigens (strain QYMF), this protein is Phosphoglucosamine mutase.